The following is a 368-amino-acid chain: tRNA-specific 2-thiouridylase MnmA (368 aa).

ATP is bound by residues 14–21 and leucine 40; that span reads AMSGGVDS. Cysteine 108 serves as the catalytic Nucleophile. An intrachain disulfide couples cysteine 108 to cysteine 204. Residue glycine 132 coordinates ATP. Residues 154–156 are interaction with tRNA; sequence KDQ. The active-site Cysteine persulfide intermediate is the cysteine 204.

It belongs to the MnmA/TRMU family.

The protein resides in the cytoplasm. The enzyme catalyses S-sulfanyl-L-cysteinyl-[protein] + uridine(34) in tRNA + AH2 + ATP = 2-thiouridine(34) in tRNA + L-cysteinyl-[protein] + A + AMP + diphosphate + H(+). In terms of biological role, catalyzes the 2-thiolation of uridine at the wobble position (U34) of tRNA, leading to the formation of s(2)U34. The chain is tRNA-specific 2-thiouridylase MnmA from Rickettsia canadensis (strain McKiel).